The primary structure comprises 249 residues: Aquaporin TIP4-3 (249 aa).

2 helical membrane-spanning segments follow: residues 20-40 (GVLG…GAAM) and 56-76 (TAVA…GFHI). Positions 82 to 84 (NPA) match the NPA 1 motif. 3 consecutive transmembrane segments (helical) span residues 100-122 (SSLY…RWLT), 141-161 (GVVA…ATIL), and 169-189 (GAGP…GAAL). The NPA 2 motif lies at 195–197 (NPA). The chain crosses the membrane as a helical span at residues 214 to 234 (VYWVGPLAGGPLAVLVYECCF).

This sequence belongs to the MIP/aquaporin (TC 1.A.8) family. TIP (TC 1.A.8.10) subfamily.

It localises to the vacuole membrane. Aquaporins facilitate the transport of water and small neutral solutes across cell membranes. This chain is Aquaporin TIP4-3 (TIP4-3), found in Zea mays (Maize).